Reading from the N-terminus, the 306-residue chain is Peroxisomal protein PEX21 (306 aa).

Residue C4 forms a Glycyl cysteine thioester (Cys-Gly) (interchain with G-Cter in ubiquitin) linkage. Residues 172–203 (ERQVQDDEKEQQQDKDDDFHLKETSPLDEDQR) form a disordered region.

Belongs to the peroxin-21 family. As to quaternary structure, interacts with PEX7. In terms of processing, monoubiquitinated at Cys-4; acts as a signal for PEX21 extraction and is required for proper export from peroxisomes and recycling.

The protein resides in the cytoplasm. The protein localises to the cytosol. It is found in the peroxisome. In terms of biological role, mediates peroxisomal import of proteins containing a C-terminal PTS2-type peroxisomal targeting signal via its interaction with PEX7. Interaction with PEX7 only takes place when PEX7 is associated with cargo proteins containing a PTS2 peroxisomal targeting signal. PEX7 along with PTS2-containing cargo proteins are then translocated through the PEX13-PEX14 docking complex together with PEX21. The polypeptide is Peroxisomal protein PEX21 (PEX21) (Kluyveromyces lactis (strain ATCC 8585 / CBS 2359 / DSM 70799 / NBRC 1267 / NRRL Y-1140 / WM37) (Yeast)).